The chain runs to 379 residues: Glutamate 5-kinase (379 aa).

Lysine 19 serves as a coordination point for ATP. Substrate contacts are provided by serine 59, aspartate 146, and asparagine 158. ATP-binding positions include 178-179 and 220-226; these read TD and TGGMATK. The PUA domain occupies 285 to 363; the sequence is SGDIIIDDGA…KDIISILGHD (79 aa).

Belongs to the glutamate 5-kinase family.

It is found in the cytoplasm. It carries out the reaction L-glutamate + ATP = L-glutamyl 5-phosphate + ADP. It participates in amino-acid biosynthesis; L-proline biosynthesis; L-glutamate 5-semialdehyde from L-glutamate: step 1/2. In terms of biological role, catalyzes the transfer of a phosphate group to glutamate to form L-glutamate 5-phosphate. The polypeptide is Glutamate 5-kinase (Vibrio campbellii (strain ATCC BAA-1116)).